The primary structure comprises 530 residues: Proline--tRNA ligase, cytoplasmic (530 aa).

It belongs to the class-II aminoacyl-tRNA synthetase family.

Its subcellular location is the cytoplasm. It localises to the cytosol. It catalyses the reaction tRNA(Pro) + L-proline + ATP = L-prolyl-tRNA(Pro) + AMP + diphosphate. Its function is as follows. Catalyzes the attachment of proline to tRNA(Pro) in a two-step reaction: proline is first activated by ATP to form Pro-AMP and then transferred to the acceptor end of tRNA(Pro). In Arabidopsis thaliana (Mouse-ear cress), this protein is Proline--tRNA ligase, cytoplasmic.